The chain runs to 149 residues: 3-dehydroquinate dehydratase (149 aa).

Y26 serves as the catalytic Proton acceptor. N77, H83, and D90 together coordinate substrate. Residue H103 is the Proton donor of the active site. Residues 104–105 (LS) and R114 each bind substrate.

It belongs to the type-II 3-dehydroquinase family. In terms of assembly, homododecamer.

It carries out the reaction 3-dehydroquinate = 3-dehydroshikimate + H2O. Its pathway is metabolic intermediate biosynthesis; chorismate biosynthesis; chorismate from D-erythrose 4-phosphate and phosphoenolpyruvate: step 3/7. Catalyzes a trans-dehydration via an enolate intermediate. This is 3-dehydroquinate dehydratase from Aliivibrio salmonicida (strain LFI1238) (Vibrio salmonicida (strain LFI1238)).